A 66-amino-acid chain; its full sequence is Large ribosomal subunit protein bL33c (66 aa).

The protein belongs to the bacterial ribosomal protein bL33 family.

It is found in the plastid. In Epifagus virginiana (Beechdrops), this protein is Large ribosomal subunit protein bL33c (rpl33).